Reading from the N-terminus, the 82-residue chain is Putative membrane protein insertion efficiency factor (82 aa).

Belongs to the UPF0161 family.

The protein resides in the cell inner membrane. Its function is as follows. Could be involved in insertion of integral membrane proteins into the membrane. This Rickettsia typhi (strain ATCC VR-144 / Wilmington) protein is Putative membrane protein insertion efficiency factor.